We begin with the raw amino-acid sequence, 196 residues long: MNMDIFDNDLSIPVNLIRQWCFCPRIVYYQELLAIKPNKPLWVAQGEEFHKKVEQLEKRRSFSRYGLENAIRHFNLSIKSQKYKLHGIVDWVIETDTNVYVVEYKTNPNPNSLGHKLQIAAYALLVQEYFAKPCKTTFLTSDKKSYEIKITDELINKLIKTISDILSTLDSGNKPDSSASDHQCIQCEYYNFCNDR.

[4Fe-4S] cluster is bound at residue C23. The Mn(2+) site is built by H50, D90, and E103. Residues C184, C187, and C193 each coordinate [4Fe-4S] cluster.

Belongs to the CRISPR-associated exonuclease Cas4 family. Requires Mg(2+) as cofactor. It depends on [4Fe-4S] cluster as a cofactor.

The enzyme catalyses exonucleolytic cleavage in the 5'- to 3'-direction to yield nucleoside 3'-phosphates.. Its function is as follows. CRISPR (clustered regularly interspaced short palindromic repeat) is an adaptive immune system that provides protection against mobile genetic elements (viruses, transposable elements and conjugative plasmids). CRISPR clusters contain sequences complementary to antecedent mobile elements and target invading nucleic acids. CRISPR clusters are transcribed and processed into CRISPR RNA (crRNA). This may be a 5' to 3' ssDNA exonuclease. This is CRISPR-associated exonuclease Cas4 from Francisella tularensis subsp. novicida (strain U112).